The sequence spans 128 residues: ARPKSDCEKHRESTEKTGTIMKLIPKCKENSDYEELQCYEDSKFCVCYDKKGHAASPISTKVKECGCYLKQKERKDSGRESAIIPQCEEDGKWAKKQLWEFNKSCWCVDEKGEQVGKIHHDCDSLKCE.

2 consecutive Thyroglobulin type-1 domains span residues 4–67 (KSDC…ECGC) and 72–127 (KERK…SLKC). 4 cysteine pairs are disulfide-bonded: cysteine 7-cysteine 27, cysteine 38-cysteine 45, cysteine 47-cysteine 67, and cysteine 107-cysteine 127.

Expressed by the venom gland.

The protein resides in the secreted. Its function is as follows. Cysteine proteinase inhibitor. This is U24-ctenitoxin-Pn1a from Phoneutria nigriventer (Brazilian armed spider).